Reading from the N-terminus, the 171-residue chain is S-ribosylhomocysteine lyase (171 aa).

Fe cation-binding residues include His54, His58, and Cys128.

This sequence belongs to the LuxS family. In terms of assembly, homodimer. Fe cation is required as a cofactor.

The enzyme catalyses S-(5-deoxy-D-ribos-5-yl)-L-homocysteine = (S)-4,5-dihydroxypentane-2,3-dione + L-homocysteine. In terms of biological role, involved in the synthesis of autoinducer 2 (AI-2) which is secreted by bacteria and is used to communicate both the cell density and the metabolic potential of the environment. The regulation of gene expression in response to changes in cell density is called quorum sensing. Catalyzes the transformation of S-ribosylhomocysteine (RHC) to homocysteine (HC) and 4,5-dihydroxy-2,3-pentadione (DPD). The chain is S-ribosylhomocysteine lyase from Edwardsiella ictaluri (strain 93-146).